The chain runs to 154 residues: Ribosome maturation factor RimP (154 aa).

This sequence belongs to the RimP family.

It is found in the cytoplasm. Required for maturation of 30S ribosomal subunits. The protein is Ribosome maturation factor RimP of Cyanothece sp. (strain PCC 7425 / ATCC 29141).